A 446-amino-acid chain; its full sequence is Ribosomal protein uS12 methylthiotransferase RimO (446 aa).

Residues 9 to 121 form the MTTase N-terminal domain; that stretch reads PKVGFVSLGC…VLDAIHAALP (113 aa). The [4Fe-4S] cluster site is built by Cys18, Cys54, Cys83, Cys152, Cys156, and Cys159. The 238-residue stretch at 138 to 375 folds into the Radical SAM core domain; the sequence is LTPPHYAYLK…MAVQEAISRQ (238 aa). Positions 378 to 445 constitute a TRAM domain; that stretch reads QRRVGQRQRV…AHDLYGMVVS (68 aa).

Belongs to the methylthiotransferase family. RimO subfamily. Requires [4Fe-4S] cluster as cofactor.

Its subcellular location is the cytoplasm. It carries out the reaction L-aspartate(89)-[ribosomal protein uS12]-hydrogen + (sulfur carrier)-SH + AH2 + 2 S-adenosyl-L-methionine = 3-methylsulfanyl-L-aspartate(89)-[ribosomal protein uS12]-hydrogen + (sulfur carrier)-H + 5'-deoxyadenosine + L-methionine + A + S-adenosyl-L-homocysteine + 2 H(+). Its function is as follows. Catalyzes the methylthiolation of an aspartic acid residue of ribosomal protein uS12. This chain is Ribosomal protein uS12 methylthiotransferase RimO, found in Acidithiobacillus ferrooxidans (strain ATCC 23270 / DSM 14882 / CIP 104768 / NCIMB 8455) (Ferrobacillus ferrooxidans (strain ATCC 23270)).